We begin with the raw amino-acid sequence, 131 residues long: Large ribosomal subunit protein eL32 (131 aa).

This sequence belongs to the eukaryotic ribosomal protein eL32 family. In terms of assembly, component of the large ribosomal subunit. Mature ribosomes consist of a small (40S) and a large (60S) subunit. The 40S subunit contains about 32 different proteins and 1 molecule of RNA (18S). The 60S subunit contains 45 different proteins and 3 molecules of RNA (25S, 5.8S and 5S).

Its subcellular location is the cytoplasm. Functionally, component of the ribosome, a large ribonucleoprotein complex responsible for the synthesis of proteins in the cell. The small ribosomal subunit (SSU) binds messenger RNAs (mRNAs) and translates the encoded message by selecting cognate aminoacyl-transfer RNA (tRNA) molecules. The large subunit (LSU) contains the ribosomal catalytic site termed the peptidyl transferase center (PTC), which catalyzes the formation of peptide bonds, thereby polymerizing the amino acids delivered by tRNAs into a polypeptide chain. The nascent polypeptides leave the ribosome through a tunnel in the LSU and interact with protein factors that function in enzymatic processing, targeting, and the membrane insertion of nascent chains at the exit of the ribosomal tunnel. The sequence is that of Large ribosomal subunit protein eL32 from Candida albicans (strain SC5314 / ATCC MYA-2876) (Yeast).